The primary structure comprises 204 residues: Signal peptidase I (204 aa).

Topologically, residues 1–10 are cytoplasmic; sequence MNLFKNFLKE. Residues 11–30 traverse the membrane as a helical segment; it reads WGLFLLILSLLALSRIFFWS. At 31–204 the chain is on the extracellular side; it reads NVRVEGHSMD…FWPITRIGTF (174 aa). Residues Ser38 and Lys76 contribute to the active site.

It belongs to the peptidase S26 family.

The protein localises to the cell membrane. It catalyses the reaction Cleavage of hydrophobic, N-terminal signal or leader sequences from secreted and periplasmic proteins.. This Streptococcus pneumoniae (strain ATCC BAA-255 / R6) protein is Signal peptidase I (lepB).